We begin with the raw amino-acid sequence, 369 residues long: Ribonuclease D (369 aa).

The 3'-5' exonuclease domain maps to 4-168 (EIITTTAQLH…CLEKLQQQLE (165 aa)). An HRDC domain is found at 207–286 (DRQGLAIIKA…TQVISQDEST (80 aa)).

It belongs to the RNase D family. A divalent metal cation serves as cofactor.

The protein resides in the cytoplasm. The catalysed reaction is Exonucleolytic cleavage that removes extra residues from the 3'-terminus of tRNA to produce 5'-mononucleotides.. In terms of biological role, exonuclease involved in the 3' processing of various precursor tRNAs. Initiates hydrolysis at the 3'-terminus of an RNA molecule and releases 5'-mononucleotides. The protein is Ribonuclease D of Psychromonas ingrahamii (strain DSM 17664 / CCUG 51855 / 37).